The sequence spans 394 residues: Xylose isomerase (394 aa).

Active-site residues include histidine 54 and aspartate 57. Residues glutamate 181, glutamate 217, histidine 220, aspartate 245, aspartate 255, aspartate 257, and aspartate 292 each contribute to the Mg(2+) site.

The protein belongs to the xylose isomerase family. In terms of assembly, homotetramer. Requires Mg(2+) as cofactor.

Its subcellular location is the cytoplasm. It catalyses the reaction alpha-D-xylose = alpha-D-xylulofuranose. The protein is Xylose isomerase (xylA) of Actinoplanes missouriensis (strain ATCC 14538 / DSM 43046 / CBS 188.64 / JCM 3121 / NBRC 102363 / NCIMB 12654 / NRRL B-3342 / UNCC 431).